We begin with the raw amino-acid sequence, 81 residues long: Weak neurotoxin OH-72 (81 aa).

The signal sequence occupies residues 1-16 (LTLVVVTIVCLDLGYT). Disulfide bonds link C19/C40, C22/C27, C33/C58, C62/C73, and C74/C79.

This sequence belongs to the three-finger toxin family. Ancestral subfamily. Orphan group II sub-subfamily. As to expression, expressed by the venom gland.

The protein localises to the secreted. In terms of biological role, binds with low affinity to muscular (alpha-1-beta-1-delta-epsilon/CHRNA1-CHRNB1-CHRND-CHRNE) and very low affinity to neuronal (alpha-7/CHRNA7) nicotinic acetylcholine receptor (nAChR). The protein is Weak neurotoxin OH-72 of Ophiophagus hannah (King cobra).